The following is a 330-amino-acid chain: 4-epi-cubebol synthase ((2E,6E)-farnesyl diphosphate cyclizing) (330 aa).

Residues Asp91 and Glu96 each contribute to the Mg(2+) site. The DDXXXE motif signature appears at 91 to 96 (DDAFCE). Arg184 is a binding site for substrate. Mg(2+) is bound by residues Asn230 and Ser234. Residue Lys237 coordinates substrate. Glu238 is a Mg(2+) binding site. Residue 316–317 (RY) coordinates substrate.

It belongs to the terpene synthase family. Requires Mg(2+) as cofactor.

The catalysed reaction is (2E,6E)-farnesyl diphosphate + H2O = 4-epi-cubebol + diphosphate. It participates in secondary metabolite biosynthesis; terpenoid biosynthesis. Its function is as follows. Catalyzes the conversion of (2E,6E)-farnesyl diphosphate (FPP) to yield the bicyclic sesquiterpenol 4-epi-cubebol via a 1,10-cyclization, which requires the abstraction of the pyrophosphate from FPP to yield a (E,E)-germacradienyl cation. The only accepted substrate is (2E,6E)-farnesyl diphosphate (FPP). This is 4-epi-cubebol synthase ((2E,6E)-farnesyl diphosphate cyclizing) from Streptosporangium roseum (strain ATCC 12428 / DSM 43021 / JCM 3005 / KCTC 9067 / NCIMB 10171 / NRRL 2505 / NI 9100).